The following is a 208-amino-acid chain: Fibroblast growth factor 6 (208 aa).

A signal peptide spans 1 to 37 (MALGQKLFITMSRGAGRLQGTLWALVFLGILVGMVVP). N-linked (GlcNAc...) asparagine glycosylation is present at Asn-45. An intrachain disulfide couples Cys-90 to Cys-157.

Belongs to the heparin-binding growth factors family. In terms of assembly, interacts with FGFR1, FGFR2 and FGFR4. Affinity between fibroblast growth factors (FGFs) and their receptors is increased by heparan sulfate glycosaminoglycans that function as coreceptors. In terms of tissue distribution, leukemia cell lines with platelet/ megakaryocytic differentiation potential.

It localises to the secreted. The protein localises to the extracellular space. Plays an important role in the regulation of cell proliferation, cell differentiation, angiogenesis and myogenesis, and is required for normal muscle regeneration. This is Fibroblast growth factor 6 (FGF6) from Homo sapiens (Human).